The primary structure comprises 315 residues: Transaldolase (315 aa).

K128 serves as the catalytic Schiff-base intermediate with substrate.

It belongs to the transaldolase family. Type 1 subfamily. As to quaternary structure, homodimer.

It is found in the cytoplasm. It carries out the reaction D-sedoheptulose 7-phosphate + D-glyceraldehyde 3-phosphate = D-erythrose 4-phosphate + beta-D-fructose 6-phosphate. It functions in the pathway carbohydrate degradation; pentose phosphate pathway; D-glyceraldehyde 3-phosphate and beta-D-fructose 6-phosphate from D-ribose 5-phosphate and D-xylulose 5-phosphate (non-oxidative stage): step 2/3. Its function is as follows. Transaldolase is important for the balance of metabolites in the pentose-phosphate pathway. The protein is Transaldolase of Opitutus terrae (strain DSM 11246 / JCM 15787 / PB90-1).